The sequence spans 1034 residues: Multidrug export protein AcrF (1034 aa).

At 1-9 the chain is on the cytoplasmic side; that stretch reads MANFFIRRP. A helical membrane pass occupies residues 10–28; the sequence is IFAWVLAIILMMAGALAIL. The Periplasmic segment spans residues 29–339; sequence QLPVAQYPTI…TPFVQLSIHE (311 aa). Residues 340-359 traverse the membrane as a helical segment; the sequence is VVKTLFEAIMLVFLVMYLFL. At 360–365 the chain is on the cytoplasmic side; that stretch reads QNMRAT. A helical transmembrane segment spans residues 366–385; it reads LIPTIAVPVVLLGTFAILAA. The Periplasmic portion of the chain corresponds to 386–391; the sequence is FGYSIN. Residues 392-413 traverse the membrane as a helical segment; that stretch reads TLTMFGMVLAIGLLVDDAIVVV. Over 414-441 the chain is Cytoplasmic; the sequence is ENVERVMMEDKLPPKEATEKSMSQIQGA. Residues 442–460 traverse the membrane as a helical segment; sequence LVGIAMVLSAVFIPMAFFG. Topologically, residues 461-473 are periplasmic; sequence GSTGAIYRQFSIT. A helical transmembrane segment spans residues 474–496; sequence IVSAMALSVLVALILTPALCATL. Residues 497-537 are Cytoplasmic-facing; it reads LKPVSAEHHENKGGFFGWFNTTFDHSVNHYTNSVGKILGST. Residues 538-556 traverse the membrane as a helical segment; that stretch reads GRYLLIYALIVAGMVVLFL. Residues 557-871 lie on the Periplasmic side of the membrane; that stretch reads RLPSSFLPEE…SYQERLSGNQ (315 aa). A helical transmembrane segment spans residues 872 to 891; it reads APALVAISFVVVFLCLAALY. Over 892–897 the chain is Cytoplasmic; that stretch reads ESWSIP. Residues 898-917 traverse the membrane as a helical segment; that stretch reads VSVMLVVPLGIVGVLLAATL. The Periplasmic portion of the chain corresponds to 918-923; the sequence is FNQKND. The helical transmembrane segment at 924–945 threads the bilayer; sequence VYFMVGLLTTIGLSAKNAILIV. The Cytoplasmic segment spans residues 946 to 973; the sequence is EFAKDLMEKEGKGVVEATLMAVRMRLRP. Residues 974-992 form a helical membrane-spanning segment; the sequence is ILMTSLAFILGVLPLAISN. Topologically, residues 993–1005 are periplasmic; it reads GAGSGAQNAVGIG. Residues 1006–1028 traverse the membrane as a helical segment; the sequence is VMGGMVSATLLAIFFVPVFFVVI. Topologically, residues 1029 to 1034 are cytoplasmic; the sequence is RRCFKG.

Belongs to the resistance-nodulation-cell division (RND) (TC 2.A.6) family. As to quaternary structure, part of the tripartite efflux system AcrEF-TolC, which is composed of an inner membrane transporter, AcrF, a periplasmic membrane fusion protein, AcrE, and an outer membrane component, TolC. The complex forms a large protein conduit and can translocate molecules across both the inner and outer membranes.

The protein localises to the cell inner membrane. Part of the tripartite efflux system AcrEF-TolC. Involved in the efflux of indole and organic solvents. The protein is Multidrug export protein AcrF (acrF) of Escherichia coli (strain K12).